The primary structure comprises 384 residues: Succinyl-diaminopimelate desuccinylase (384 aa).

His-72 serves as a coordination point for Zn(2+). Asp-74 is a catalytic residue. A Zn(2+)-binding site is contributed by Asp-105. The active-site Proton acceptor is the Glu-139. Zn(2+)-binding residues include Glu-140, Glu-168, and His-355.

Belongs to the peptidase M20A family. DapE subfamily. In terms of assembly, homodimer. Zn(2+) is required as a cofactor. It depends on Co(2+) as a cofactor.

The enzyme catalyses N-succinyl-(2S,6S)-2,6-diaminopimelate + H2O = (2S,6S)-2,6-diaminopimelate + succinate. The protein operates within amino-acid biosynthesis; L-lysine biosynthesis via DAP pathway; LL-2,6-diaminopimelate from (S)-tetrahydrodipicolinate (succinylase route): step 3/3. Its function is as follows. Catalyzes the hydrolysis of N-succinyl-L,L-diaminopimelic acid (SDAP), forming succinate and LL-2,6-diaminopimelate (DAP), an intermediate involved in the bacterial biosynthesis of lysine and meso-diaminopimelic acid, an essential component of bacterial cell walls. This is Succinyl-diaminopimelate desuccinylase from Blochmanniella pennsylvanica (strain BPEN).